Reading from the N-terminus, the 189-residue chain is UPF0301 protein A1C_00165 (189 aa).

This sequence belongs to the UPF0301 (AlgH) family.

This is UPF0301 protein A1C_00165 from Rickettsia akari (strain Hartford).